The following is a 296-amino-acid chain: Pyruvate synthase subunit PorB (296 aa).

[4Fe-4S] cluster-binding residues include C17, C20, and C45. Residues 140 to 150 are compositionally biased toward polar residues; sequence TPFDASTTTTP. The disordered stretch occupies residues 140–159; it reads TPFDASTTTTPAGKVSFGNP. Residue C210 participates in [4Fe-4S] cluster binding.

In terms of assembly, heterotetramer of one alpha, one beta, one delta and one gamma chain. Requires [4Fe-4S] cluster as cofactor.

It catalyses the reaction 2 oxidized [2Fe-2S]-[ferredoxin] + pyruvate + CoA = 2 reduced [2Fe-2S]-[ferredoxin] + acetyl-CoA + CO2 + H(+). The sequence is that of Pyruvate synthase subunit PorB (porB) from Methanosarcina barkeri (strain Fusaro / DSM 804).